The sequence spans 122 residues: Phospholipase A2 crotoxin basic chain (122 aa).

7 disulfide bridges follow: Cys26/Cys115, Cys28/Cys44, Cys43/Cys95, Cys49/Cys122, Cys50/Cys88, Cys57/Cys81, and Cys75/Cys86. Ca(2+)-binding residues include Tyr27, Gly29, and Gly31. His47 is an active-site residue. Asp48 provides a ligand contact to Ca(2+). Asp89 is a catalytic residue.

As to quaternary structure, heterodimer of one acidic (CA also named crotapotin) and one basic (CB) subunits; non-covalently linked. Ca(2+) serves as cofactor. Expressed by the venom gland.

It localises to the secreted. The enzyme catalyses a 1,2-diacyl-sn-glycero-3-phosphocholine + H2O = a 1-acyl-sn-glycero-3-phosphocholine + a fatty acid + H(+). Functionally, heterodimer CA-CB: Crotoxin is a potent presynaptic neurotoxin that possesses phospholipase A2 (PLA2) activity and exerts a lethal action by blocking neuromuscular transmission. It consists of a non-covalent association of a basic and weakly toxic PLA2 subunit (CB), with a small acidic, non-enzymatic and non-toxic subunit (CA also named crotapotin). The complex acts by binding to a specific 48-kDa protein (R48) receptor located on presynaptic membranes, forming a transient ternary complex CA-CB-R48, followed by dissociation of the CA-CB complex and release of the CA subunit. At equilibrium, only the CB subunits remain associated with the specific crotoxin receptor. In addition to neurotoxicity, crotoxin has been found to exert nephrotoxicity, and cardiovascular toxicity. Moreover, anti-inflammatory, immunomodulatory, anti-tumor and analgesic effects of crotoxin have also been reported. In terms of biological role, monomer CB: The basic subunit of crotoxin is a snake venom phospholipase A2 (PLA2) that exhibits weak neurotoxicity and strong anticoagulant effects by binding to factor Xa (F10) and inhibiting the prothrombinase activity. In addition, it exerts myotoxicity, nephrotoxicity, and cardiovascular toxicity as well as anti-inflammatory, immunomodulatory, anti-tumor and analgesic effects. Also shows a strong antimicrobial activity against X.axonopodis passiforae (Gram-negative) which is completely dependent on the enzymatic activity. PLA2 catalyzes the calcium-dependent hydrolysis of the 2- acyl groups in 3-sn-phosphoglycerides. This is Phospholipase A2 crotoxin basic chain from Crotalus durissus collilineatus (Brazilian rattlesnake).